We begin with the raw amino-acid sequence, 204 residues long: Holliday junction branch migration complex subunit RuvA (204 aa).

The segment at 1-67 (MIAFLSGHLV…ETELVLYGFG (67 aa)) is domain I. The segment at 68–146 (SPAERDLFVE…HWRQGMGVAD (79 aa)) is domain II. The tract at residues 147 to 157 (QPLAGGPPMPI) is flexible linker. The interval 157-204 (IREEVEMALLALGYSTQEIQAALQALPTHPRPTEDWLRDAITYLSQQP) is domain III.

It belongs to the RuvA family. Homotetramer. Forms an RuvA(8)-RuvB(12)-Holliday junction (HJ) complex. HJ DNA is sandwiched between 2 RuvA tetramers; dsDNA enters through RuvA and exits via RuvB. An RuvB hexamer assembles on each DNA strand where it exits the tetramer. Each RuvB hexamer is contacted by two RuvA subunits (via domain III) on 2 adjacent RuvB subunits; this complex drives branch migration. In the full resolvosome a probable DNA-RuvA(4)-RuvB(12)-RuvC(2) complex forms which resolves the HJ.

It localises to the cytoplasm. In terms of biological role, the RuvA-RuvB-RuvC complex processes Holliday junction (HJ) DNA during genetic recombination and DNA repair, while the RuvA-RuvB complex plays an important role in the rescue of blocked DNA replication forks via replication fork reversal (RFR). RuvA specifically binds to HJ cruciform DNA, conferring on it an open structure. The RuvB hexamer acts as an ATP-dependent pump, pulling dsDNA into and through the RuvAB complex. HJ branch migration allows RuvC to scan DNA until it finds its consensus sequence, where it cleaves and resolves the cruciform DNA. The chain is Holliday junction branch migration complex subunit RuvA from Synechococcus sp. (strain JA-2-3B'a(2-13)) (Cyanobacteria bacterium Yellowstone B-Prime).